The chain runs to 314 residues: DNA-directed RNA polymerase subunit alpha (314 aa).

The tract at residues 1–228 (MIEIEKPRIE…EHLNIFVGLT (228 aa)) is alpha N-terminal domain (alpha-NTD). The segment at 245-314 (KEKVLEMSIE…DLGLGLRKED (70 aa)) is alpha C-terminal domain (alpha-CTD).

Belongs to the RNA polymerase alpha chain family. In terms of assembly, homodimer. The RNAP catalytic core consists of 2 alpha, 1 beta, 1 beta' and 1 omega subunit. When a sigma factor is associated with the core the holoenzyme is formed, which can initiate transcription.

The catalysed reaction is RNA(n) + a ribonucleoside 5'-triphosphate = RNA(n+1) + diphosphate. Its function is as follows. DNA-dependent RNA polymerase catalyzes the transcription of DNA into RNA using the four ribonucleoside triphosphates as substrates. The polypeptide is DNA-directed RNA polymerase subunit alpha (Staphylococcus saprophyticus subsp. saprophyticus (strain ATCC 15305 / DSM 20229 / NCIMB 8711 / NCTC 7292 / S-41)).